The sequence spans 292 residues: Elongation factor Ts (292 aa).

Residues Thr-79–Val-82 form an involved in Mg(2+) ion dislocation from EF-Tu region.

The protein belongs to the EF-Ts family.

It is found in the cytoplasm. Its function is as follows. Associates with the EF-Tu.GDP complex and induces the exchange of GDP to GTP. It remains bound to the aminoacyl-tRNA.EF-Tu.GTP complex up to the GTP hydrolysis stage on the ribosome. This chain is Elongation factor Ts, found in Xylella fastidiosa (strain Temecula1 / ATCC 700964).